The sequence spans 392 residues: Galactokinase (392 aa).

Alpha-D-galactose-binding residues include arginine 37, glutamate 43, histidine 44, and aspartate 46. The ATP site is built by glycine 136, glycine 138, serine 140, and serine 141. Aspartate 186 lines the alpha-D-galactose pocket. The Proton acceptor role is filled by aspartate 186. Residue serine 230 is modified to Phosphoserine. Tyrosine 236 lines the alpha-D-galactose pocket.

It belongs to the GHMP kinase family. GalK subfamily. As to quaternary structure, homodimer.

It catalyses the reaction alpha-D-galactose + ATP = alpha-D-galactose 1-phosphate + ADP + H(+). It functions in the pathway carbohydrate metabolism; galactose metabolism. Functionally, catalyzes the transfer of a phosphate from ATP to alpha-D-galactose and participates in the first committed step in the catabolism of galactose. In Homo sapiens (Human), this protein is Galactokinase.